We begin with the raw amino-acid sequence, 4168 residues long: Centrosome-associated protein ALMS1 (4168 aa).

Over residues 1–29 (MEPEDLPWPGELEEEEEEEEEEEEEEEEA) the composition is skewed to acidic residues. A disordered region spans residues 1–69 (MEPEDLPWPG…YGPQHLESID (69 aa)). A compositionally biased stretch (low complexity) spans 30-40 (AAAAAANVDDV). The segment covering 49-58 (EAGRELDSDS) has biased composition (basic and acidic residues). Residue Ser464 is modified to Phosphoserine. Tandem repeats lie at residues 539–585 (QKTL…SIFY), 586–632 (QQGL…GTFY), 633–679 (QQEL…LFFY), 680–726 (RQTL…GIFY), 727–774 (QQEF…SILY), 775–821 (PQDL…LVFY), 822–871 (QQAL…SAFY), 872–918 (QQTL…IIFS), 919–965 (QQTL…SVFY), 966–1013 (QQEL…SIFY), 1014–1060 (QQEW…SVLY), 1061–1107 (PQVL…GIFY), 1108–1155 (QQTL…SIFH), 1156–1202 (QQAL…GIFY), 1203–1249 (QQTL…GIFY), 1250–1297 (QQVL…SIFY), 1298–1344 (QQSL…GVFY), 1345–1392 (QQVL…SIFY), 1393–1439 (QQSL…GSFY), 1440–1486 (QQVL…IVIY), 1487–1534 (KQAF…GSFY), 1535–1581 (QLAL…IVNY), 1582–1628 (KQAF…ITFY), 1629–1675 (RQAL…VIFY), 1676–1722 (QQTL…IVFY), 1723–1769 (QQAL…NISY), 1770–1816 (QQEL…IVSY), 1817–1861 (QREL…VISY), 1862–1906 (EQEL…SIFH), 1907–1951 (QQEL…SVIS), 1952–1999 (QQEL…LKIS), 2060–2105 (QQLP…NIFS), 2106–2152 (PQEL…DIFY), and 2153–2200 (QKDL…LVSE). The interval 539–2200 (QKTLADTHLT…HGENHKLVSE (1662 aa)) is 34 X 47 AA approximate tandem repeat. 2 disordered regions span residues 558–579 (PEPA…SHRG) and 606–625 (GLAD…YSHR). Polar residues-rich tracts occupy residues 564 to 574 (KTATPTVLSSS) and 609 to 622 (DQTT…STSY). Disordered stretches follow at residues 699-718 (SGPA…PHSH) and 735-769 (QTEE…QREK). Polar residues predominate over residues 705-715 (KTGTATVLSTP). The disordered stretch occupies residues 841-865 (SGPADGKTGTPAVTSTSSASSSLGE). Disordered regions lie at residues 946 to 969 (GTPT…QQEL), 983 to 1007 (AIPG…SHRE), and 1027 to 1055 (LKVS…QREK). The span at 989-1003 (DQKTVPTPTVPSGSF) shows a compositional bias: polar residues. Residue Ser1189 is modified to Phosphoserine. The interval 1221-1241 (VLGPADQKTGTPTPTSASYSH) is disordered. A compositionally biased stretch (polar residues) spans 1228–1240 (KTGTPTPTSASYS). The interval 1786 to 1806 (SNVPGPADQKTGVSTVTSTSY) is disordered. Low complexity predominate over residues 1796-1806 (TGVSTVTSTSY). Ser2143 is subject to Phosphoserine. Disordered stretches follow at residues 2456–2477 (ITDS…SSVD) and 2600–2621 (HPCA…NPSS). Ser2466 is subject to Phosphoserine. Residue Ser2632 is modified to Phosphoserine. 6 disordered regions span residues 2753-2828 (HFTE…STRA), 2892-2912 (KAPR…QHQD), 3283-3310 (RQIP…AIAP), 3389-3426 (EAAQ…MKNL), 3566-3594 (QVRD…TTQH), and 3643-3704 (SLQV…HRAG). Residues 2754-2766 (FTEEQNPPRDLKQ) show a composition bias toward basic and acidic residues. A compositionally biased stretch (polar residues) spans 2767–2779 (KTSSPSSFKMHSN). Basic and acidic residues-rich tracts occupy residues 2780 to 2793 (SQDK…EGRR) and 2800 to 2816 (VDFE…ERSD). Phosphoserine is present on Ser2805. The span at 2817-2828 (FTGSHSEPSTRA) shows a compositional bias: polar residues. Positions 3294-3305 (DTTVESSHSGSN) are enriched in polar residues. A compositionally biased stretch (basic and acidic residues) spans 3392 to 3404 (QAKEKESLQKDTA). The segment covering 3405–3416 (DSSAAAAAEHSA) has biased composition (low complexity). 2 stretches are compositionally biased toward basic and acidic residues: residues 3649–3664 (STHD…KEWS) and 3680–3694 (KSLE…ELKK). Positions 3695 to 3704 (SKVLSHHRAG) are enriched in basic residues. The ALMS motif stretch occupies residues 4036–4167 (TLQESLQFHR…NQLLGRKVPW (132 aa)).

The protein belongs to the ALMS1 family. Expressed in all tissues tested including adipose and pancreas. Expressed by beta-cells of the islets in the pancreas (at protein level).

The protein resides in the cytoplasm. The protein localises to the cytoskeleton. It is found in the microtubule organizing center. It localises to the centrosome. Its subcellular location is the cilium basal body. The protein resides in the spindle pole. Functionally, involved in PCM1-dependent intracellular transport. Required, directly or indirectly, for the localization of NCAPD2 to the proximal ends of centrioles. Required for proper formation and/or maintenance of primary cilia (PC), microtubule-based structures that protrude from the surface of epithelial cells. The sequence is that of Centrosome-associated protein ALMS1 (ALMS1) from Homo sapiens (Human).